Reading from the N-terminus, the 478-residue chain is MANKSRPKKIKAPYRKYVAGEGFSSTRNDNKAKEFTITIPEDAELIETPQGSYYYDETNDTIVKLTRLSNEKKDKKGRKQSPSSSSTSSSKGEKNGKVIESEEARMHSVSVKMVLPWEIQHRIIHYLDIPEKEEKLNKTANGKKTTTGINMNYLLVCRNWYAMCLPKLYYAPALTSKNFNGFVDTIIINKKKNLGHYVFELNLSTILQSGRNSFVSKLLRRCCSNLTKFIAPQTSFGYAPLISLKSCHDLKFLDLGLVSETVKLKELFSAIKNFTKLTHLSFPRSSIDCQGFQDIQWPQNLRYLKLSGGITNEFVIDTKWPTTITTLEFSYCPQITELSIYSLLSQIGDNLKHLFFHYPMPSLAENSLDHVFTYCANLISLQLMVDYCSKWCFSEFMLSKLVEYDRPLKTLYLECSGSLGLASKIHPDDLTIAILESRLPCLKNICVSPKLGWNMKSDEVADLVVSLEDQDGSLYLNY.

Over residues 1-14 (MANKSRPKKIKAPY) the composition is skewed to basic residues. 2 disordered regions span residues 1 to 32 (MANK…DNKA) and 67 to 101 (RLSN…VIES). A compositionally biased stretch (low complexity) spans 80 to 90 (QSPSSSSTSSS). Positions 91-101 (KGEKNGKVIES) are enriched in basic and acidic residues. Residues 112–173 (KMVLPWEIQH…CLPKLYYAPA (62 aa)) enclose the F-box domain.

In terms of assembly, interacts with SKP1. Component of the probable SCF(YDR306C) complex containing CDC53, SKP1, RBX1 and YDR306C. In terms of processing, autoubiquitinated by the E3 ubiquitin ligase complex in conjunction with the E2 enzyme CDC34.

Its pathway is protein modification; protein ubiquitination. In terms of biological role, substrate recognition component of a SCF (SKP1-CUL1-F-box protein) E3 ubiquitin-protein ligase complex which mediates the ubiquitination and subsequent proteasomal degradation of target proteins. Probably recognizes and binds to phosphorylated target proteins. The polypeptide is F-box protein YDR306C (Saccharomyces cerevisiae (strain ATCC 204508 / S288c) (Baker's yeast)).